Consider the following 41-residue polypeptide: Photosystem II reaction center protein L (41 aa).

The helical transmembrane segment at 20 to 40 (SLYLGLLLVFVVGLLFSSYFL) threads the bilayer.

The protein belongs to the PsbL family. PSII is composed of 1 copy each of membrane proteins PsbA, PsbB, PsbC, PsbD, PsbE, PsbF, PsbH, PsbI, PsbJ, PsbK, PsbL, PsbM, PsbT, PsbX, PsbY, PsbZ, Psb30/Ycf12, peripheral proteins PsbO, CyanoQ (PsbQ), PsbU, PsbV and a large number of cofactors. It forms dimeric complexes.

It is found in the cellular thylakoid membrane. One of the components of the core complex of photosystem II (PSII). PSII is a light-driven water:plastoquinone oxidoreductase that uses light energy to abstract electrons from H(2)O, generating O(2) and a proton gradient subsequently used for ATP formation. It consists of a core antenna complex that captures photons, and an electron transfer chain that converts photonic excitation into a charge separation. This subunit is found at the monomer-monomer interface and is required for correct PSII assembly and/or dimerization. The sequence is that of Photosystem II reaction center protein L from Synechococcus sp. (strain JA-3-3Ab) (Cyanobacteria bacterium Yellowstone A-Prime).